The chain runs to 478 residues: MTLSFITRWRDELPETYTALSPTPLNNARLIWHNTELANTLSIPSSLFKNAAGVWGGETLLPGMSPLAQVYSGHQFGVWAGQLGDGRGILLGEQLLADGTTMDWHLKGAGLTPYSRMGDGRAVLRSTIRESLASEAMHYLGIPTTRALSIVTSDSPVYRETVEPGAMLIRVAPSHLRFGHFEHFYYRREPEKVRQLADFAIRHYWSHLEDDEDKYRLWFNDVVARTASLIAQWQTVGFAHGVMNTDNMSLLGLTLDYGPFGFLDDYEPGFICNHSDHQGRYSFDNQPAVALWNLQRLAQTLSPFVAVDALNEALDSYQQVLLTHYGQRMRQKLGFMTEQKEDNALLNELFSLMARERSDYTRTFRMLSLTEQHSAASPLRDEFIDRAAFDDWFARYRGRLQQDEVSDSERQQLMQSVNPALVLRNWLAQRAIEAAEKGDMTELHRLHEALRNPFSDRADDYVSRPPDWGKRLEVSCSS.

The ATP site is built by Gly-84, Gly-86, Arg-87, Lys-107, Asp-119, Gly-120, Arg-170, and Arg-177. The active-site Proton acceptor is Asp-246. Asn-247 and Asp-256 together coordinate Mg(2+). Asp-256 contributes to the ATP binding site.

The protein belongs to the SELO family. It depends on Mg(2+) as a cofactor. Mn(2+) is required as a cofactor.

The catalysed reaction is L-seryl-[protein] + ATP = 3-O-(5'-adenylyl)-L-seryl-[protein] + diphosphate. It carries out the reaction L-threonyl-[protein] + ATP = 3-O-(5'-adenylyl)-L-threonyl-[protein] + diphosphate. The enzyme catalyses L-tyrosyl-[protein] + ATP = O-(5'-adenylyl)-L-tyrosyl-[protein] + diphosphate. It catalyses the reaction L-histidyl-[protein] + UTP = N(tele)-(5'-uridylyl)-L-histidyl-[protein] + diphosphate. The catalysed reaction is L-seryl-[protein] + UTP = O-(5'-uridylyl)-L-seryl-[protein] + diphosphate. It carries out the reaction L-tyrosyl-[protein] + UTP = O-(5'-uridylyl)-L-tyrosyl-[protein] + diphosphate. In terms of biological role, nucleotidyltransferase involved in the post-translational modification of proteins. It can catalyze the addition of adenosine monophosphate (AMP) or uridine monophosphate (UMP) to a protein, resulting in modifications known as AMPylation and UMPylation. The sequence is that of Protein nucleotidyltransferase YdiU from Escherichia coli (strain SE11).